The chain runs to 126 residues: Holo-[acyl-carrier-protein] synthase (126 aa).

Mg(2+) is bound by residues Asp8 and Glu60.

This sequence belongs to the P-Pant transferase superfamily. AcpS family. The cofactor is Mg(2+).

Its subcellular location is the cytoplasm. The catalysed reaction is apo-[ACP] + CoA = holo-[ACP] + adenosine 3',5'-bisphosphate + H(+). In terms of biological role, transfers the 4'-phosphopantetheine moiety from coenzyme A to a Ser of acyl-carrier-protein. The chain is Holo-[acyl-carrier-protein] synthase from Ehrlichia canis (strain Jake).